The chain runs to 122 residues: Protein YqjC (122 aa).

An N-terminal signal peptide occupies residues 1–20 (MKYRIALAVSLFALSAGSYA). A disordered region spans residues 65–100 (QLRADHQKKIAKQKDEVAERQQDLAEAKQKGDADKI). A compositionally biased stretch (basic and acidic residues) spans 66–100 (LRADHQKKIAKQKDEVAERQQDLAEAKQKGDADKI).

The chain is Protein YqjC (yqjC) from Escherichia coli (strain K12).